The primary structure comprises 402 residues: L-threonine ammonia-lyase (402 aa).

Lys-51 is subject to N6-(pyridoxal phosphate)lysine. Pyridoxal 5'-phosphate contacts are provided by residues Asn-78, Gly-178 to Leu-181, and Ser-302. Residues Lys-327–Lys-402 form the ACT domain.

This sequence belongs to the serine/threonine dehydratase family. Pyridoxal 5'-phosphate serves as cofactor.

The catalysed reaction is L-threonine = 2-oxobutanoate + NH4(+). The enzyme catalyses L-serine = pyruvate + NH4(+). It functions in the pathway amino-acid biosynthesis; L-isoleucine biosynthesis; 2-oxobutanoate from L-threonine: step 1/1. Its function is as follows. Catalyzes the conversion of threonine to 2-oxobutanoate and ammonia. Functions in the threonine-dependent pathway of isoleucine biosynthesis, which is the minor pathway for isoleucine biosynthesis in G.sulfurreducens. Also displays serine ammonia-lyase activity, yielding pyruvate from L-serine. The chain is L-threonine ammonia-lyase from Geobacter sulfurreducens (strain ATCC 51573 / DSM 12127 / PCA).